The primary structure comprises 317 residues: Anamorsin homolog 2 (317 aa).

Residues 1-162 (MAKKVGVLLF…KPSWDSASVF (162 aa)) are N-terminal SAM-like domain. The segment at 163–229 (QLRKGSSQKG…EDDLLTEEDL (67 aa)) is linker. 4 residues coordinate [2Fe-2S] cluster: C240, C247, C250, and C252. The fe-S binding site A stretch occupies residues 240–252 (CAPTKKACKNCTC). Residues C278, C281, C289, and C292 each coordinate [4Fe-4S] cluster. 2 short sequence motifs (cx2C motif) span residues 278 to 281 (CGSC) and 289 to 292 (CAGC). The fe-S binding site B stretch occupies residues 278–292 (CGSCGLGDAFRCAGC).

This sequence belongs to the anamorsin family. As to quaternary structure, monomer. [2Fe-2S] cluster serves as cofactor. [4Fe-4S] cluster is required as a cofactor.

It is found in the cytoplasm. Its subcellular location is the mitochondrion intermembrane space. Its function is as follows. Component of the cytosolic iron-sulfur (Fe-S) protein assembly (CIA) machinery. Required for the maturation of extramitochondrial Fe-S proteins. Part of an electron transfer chain functioning in an early step of cytosolic Fe-S biogenesis, facilitating the de novo assembly of a [4Fe-4S] cluster on the cytosolic Fe-S scaffold complex. Electrons are transferred from NADPH via a FAD- and FMN-containing diflavin oxidoreductase. Together with the diflavin oxidoreductase, also required for the assembly of the diferric tyrosyl radical cofactor of ribonucleotide reductase (RNR), probably by providing electrons for reduction during radical cofactor maturation in the catalytic small subunit. This is Anamorsin homolog 2 from Physcomitrium patens (Spreading-leaved earth moss).